The sequence spans 274 residues: Dermonecrotic toxin LspiSicTox-betaIII1 G (274 aa).

Histidine 5 is a catalytic residue. 2 residues coordinate Mg(2+): glutamate 25 and aspartate 27. Histidine 41 (nucleophile) is an active-site residue. Intrachain disulfides connect cysteine 45–cysteine 51 and cysteine 47–cysteine 189. An N-linked (GlcNAc...) asparagine glycan is attached at asparagine 66. Aspartate 85 lines the Mg(2+) pocket.

Belongs to the arthropod phospholipase D family. Class II subfamily. Mg(2+) serves as cofactor. As to expression, expressed by the venom gland.

The protein resides in the secreted. It catalyses the reaction an N-(acyl)-sphingosylphosphocholine = an N-(acyl)-sphingosyl-1,3-cyclic phosphate + choline. The catalysed reaction is an N-(acyl)-sphingosylphosphoethanolamine = an N-(acyl)-sphingosyl-1,3-cyclic phosphate + ethanolamine. The enzyme catalyses a 1-acyl-sn-glycero-3-phosphocholine = a 1-acyl-sn-glycero-2,3-cyclic phosphate + choline. It carries out the reaction a 1-acyl-sn-glycero-3-phosphoethanolamine = a 1-acyl-sn-glycero-2,3-cyclic phosphate + ethanolamine. Its function is as follows. Dermonecrotic toxins cleave the phosphodiester linkage between the phosphate and headgroup of certain phospholipids (sphingolipid and lysolipid substrates), forming an alcohol (often choline) and a cyclic phosphate. This toxin acts on sphingomyelin (SM). It may also act on ceramide phosphoethanolamine (CPE), lysophosphatidylcholine (LPC) and lysophosphatidylethanolamine (LPE), but not on lysophosphatidylserine (LPS), and lysophosphatidylglycerol (LPG). It acts by transphosphatidylation, releasing exclusively cyclic phosphate products as second products. Induces dermonecrosis, hemolysis, increased vascular permeability, edema, inflammatory response, and platelet aggregation. This chain is Dermonecrotic toxin LspiSicTox-betaIII1 G, found in Loxosceles spinulosa (Recluse spider).